We begin with the raw amino-acid sequence, 345 residues long: SLAM family member 5 (345 aa).

An N-terminal signal peptide occupies residues Met1–Gly21. At Lys22–Gly225 the chain is on the extracellular side. The Ig-like V-type domain maps to Ile26–Tyr129. The Ig-like C2-type domain maps to Pro135–Ser207. N-linked (GlcNAc...) asparagine glycosylation is present at Asn150. A disulfide bridge connects residues Cys155 and Cys193. The chain crosses the membrane as a helical span at residues Leu226–Phe246. Topologically, residues Arg247–Ile345 are cytoplasmic. An ITSM 1 motif is present at residues Thr277 to Ile282. Phosphotyrosine is present on Tyr279. Tyr296 bears the Phosphotyrosine; by LYN mark. An ITSM 2 motif is present at residues Thr314–Val319. Tyr316 bears the Phosphotyrosine mark. The interval Gly326–Ile345 is disordered. The segment covering Ala328–Ile345 has biased composition (polar residues). Tyr341 is modified (phosphotyrosine; by FES).

As to quaternary structure, homodimer; via its extracellular domain. Forms a head to tail dimer with a CD48 molecule from another cell. Interacts with SH2 domain-containing proteins SH2D1A/SAP and SH2D1B/EAT-2. Interacts with tyrosine-protein phosphatases PTPN6/SHP-1 and PTPN11//SHP-2 via its phosphorylated cytoplasmic domain, and this interaction is blocked by SH2D1A. Interacts (via phosphorylated ITSM 1 and 2) with INPP5D/SHIP1. Phosphorylated by tyrosine-protein kinase LCK on tyrosine residues following ligation induced by agonist monoclonal antibody. The association with SH2D1A is dependent of tyrosine phosphorylation of its cytoplasmic domain. Phosphorylated on Tyr-296 and Tyr-316 following platelet aggregation. Phosphorylated on tyrosine residues upon high affinity immunoglobulin epsilon receptor aggregation in mast cells. In terms of processing, N-glycosylated. As to expression, predominantly expressed in hematopoietic tissues, such as lymph node, spleen and peripheral leukocytes. Expressed in macrophages, B-cells, monocytes, platelets, thymocytes, T-cells and dendritic cells. Highly expressed in memory T-cells. Expressed in mast cells.

It localises to the cell membrane. In terms of biological role, self-ligand receptor of the signaling lymphocytic activation molecule (SLAM) family. SLAM receptors triggered by homo- or heterotypic cell-cell interactions are modulating the activation and differentiation of a wide variety of immune cells and thus are involved in the regulation and interconnection of both innate and adaptive immune response. Activities are controlled by presence or absence of small cytoplasmic adapter proteins, SH2D1A/SAP and/or SH2D1B/EAT-2. Can mediate natural killer (NK) cell cytotoxicity dependent on SH2D1A and SH2D1B. Increases proliferative responses of activated T-cells and SH2D1A/SAP does not seem be required for this process. Homophilic interactions enhance interferon gamma/IFNG secretion in lymphocytes and induce platelet stimulation via a SH2D1A-dependent pathway. May serve as a marker for hematopoietic progenitor cells Required for a prolonged T-cell:B-cell contact, optimal T follicular helper function, and germinal center formation. In germinal centers involved in maintaining B-cell tolerance and in preventing autoimmunity. In mast cells negatively regulates high affinity immunoglobulin epsilon receptor signaling; independent of SH2D1A and SH2D1B but implicating FES and PTPN6/SHP-1. In macrophages enhances LPS-induced MAPK phosphorylation and NF-kappaB activation and modulates LPS-induced cytokine secretion; involving ITSM 2. Positively regulates macroautophagy in primary dendritic cells via stabilization of IRF8; inhibits TRIM21-mediated proteasomal degradation of IRF8. The sequence is that of SLAM family member 5 (CD84) from Homo sapiens (Human).